The sequence spans 1317 residues: MMLRTFTLLLLCIWLNPGMTSLAVESQPELWIESNYPQAPWENITLWCKSPSRVSSKFLLLKDNSQMTWIRPPYKTFQVSFFIGALTESNTGLYRCCYWKEKGWSKPSKILELEAPGQLPKPIFWIQAETPPLPGCNVNIFCHGWLQDLVFMLFKEGYTEPVDYQVPTGTMAIFSIDNLAPENEGVYICRTHIQMLPTLWSEPSNPLKLVVAGLYPKPTLTAHPGPILAPGESLSLRCQGPIYGMTFALMRLEDLKKSFYHKKPIKNEAYFYFQDLKIQDTGHYLCFYYDGSYRGSLLSDILKIWVTDTFPKTWLLVQPSPVIQMGQNVSLRCGGLMDGVGLALYKKGEEKPLQFLDASSNTGNNSFFLKNVTYRDAGIYSCHYYLTWKTSIKMATYNTVELMVVAWPSSVFKVGKTITLQCRVSHPVLEFSLEWEERTTFQKFSVDGDFLITDIEGQGTGTYSCSYRIEAHPNTWSHRSKPLKLVGPAGFLTWNSILNEAVRVSLTMQLASLLLLVVWIRWKCRRLRLREAWLLGTAQGVAMLFILMALLCCGLCNGALTEEIEIVMPTPKPELWAETNFPLAPWKNLTLWCRSPSGSTKEFVLLKDGTGWIATRPASEQVRAAFPLGALTHSHTGSYHCHSWEEMAVSEPSEALELVGTDILPKPVISASLPIRGQELQIRCKGWLEGLGFALYKKGEQEPVQQLGAVGREAFFTIQRMEDKDEGNYSCRTHTEMQPFKWSEPSEPLELVIKEMYPKPFFKTWASPVVTPGSRVTFNCSTSHEHMSFILYKDGNEIASSDLAWGNPGGSTAHFLIISVGIGDGGNYSCRYYDFSIWSEPSNPVELVVTEFYPKPTLLAQPGPVVLPGKNVTLRCQGIFQGMRFALLQEGTHTPLQFQSTSGTSADFLLHTVGAQDFGNYSCVYYETTMSNRGSSLSTPLMIWVTDTFPRPWLSAEPSSVVTMGQNVTLWCQGPVRGVGYILHKEGEATSMQLWGSTSNEGAFPIINISGASIGRYSCCYHPDWMSPIKIQPSNTLELIVTGLLPKPSLLVQPGPMVAPGENVTLQCQGELPDSTFVLLKEGTRQPLEQQRPSGYRADFWMPVVRDQDSGVYSCVYYLDSAPLVASNHSNSLEIWVTDKPPKPSLSAWPSTIFKLGKDITLQCRGPLPGVEFVLEHDGEEAPQQFSEDGDFVIDNLEGKGIGNYSCSYRLQAYPDIWSEPSDTLELVGAAGPVAQECTVGNIVRSTLIVVVVVALGIVLAVEWKKWPRLRTRGSETDGRDQTVVLEECNQEGEPGTTTNSPSSASQEVSVELTVPI.

Positions 1–20 are cleaved as a signal peptide; it reads MMLRTFTLLLLCIWLNPGMT. 5 consecutive Ig-like C2-type domains span residues 21 to 112, 114 to 211, 216 to 302, 311 to 398, and 400 to 481; these read SLAV…KILE, EAPG…KLVV, PKPT…SDIL, PKTW…ATYN, and VELM…HRSK. The Extracellular segment spans residues 21-499; the sequence is SLAVESQPEL…GFLTWNSILN (479 aa). A glycan (N-linked (GlcNAc...) asparagine) is linked at N43. The cysteines at positions 48 and 96 are disulfide-linked. An intrachain disulfide couples C238 to C286. N-linked (GlcNAc...) asparagine glycans are attached at residues N328 and N371. Intrachain disulfides connect C333–C382 and C422–C465. The chain crosses the membrane as a helical span at residues 500–520; sequence EAVRVSLTMQLASLLLLVVWI. Topologically, residues 521 to 531 are cytoplasmic; that stretch reads RWKCRRLRLRE. The chain crosses the membrane as a helical span at residues 532–552; the sequence is AWLLGTAQGVAMLFILMALLC. Residues 553–1317 lie on the Extracellular side of the membrane; it reads CGLCNGALTE…EVSVELTVPI (765 aa). Ig-like C2-type domains lie at 570 to 658, 659 to 753, 758 to 850, 854 to 938, 946 to 1041, 1046 to 1131, and 1142 to 1223; these read TPKP…ALEL, VGTD…ELVI, PKPF…LVVT, PKPT…SSLS, TDTF…ELIV, PKPS…NHSN, and PKPS…EPSD. C780 and C830 are joined by a disulfide. Residue N871 is glycosylated (N-linked (GlcNAc...) asparagine). C876 and C923 are disulfide-bonded. N967 and N1063 each carry an N-linked (GlcNAc...) asparagine glycan. Intrachain disulfides connect C1068–C1115 and C1164–C1207. Residues 1290–1310 form a disordered region; the sequence is NQEGEPGTTTNSPSSASQEVS. Positions 1296-1309 are enriched in polar residues; that stretch reads GTTTNSPSSASQEV.

As to quaternary structure, interacts with INHA; the interaction is not confirmed by standard receptor binding assays. Interacts with ACVR1B; the interaction appears to be ligand-dependent as it is diminished by inhibin B and activin A. Interacts with ACVR2A, ACVR2B, ACVRL1 and BMPR1B. Interacts with HECTD1.

The protein localises to the membrane. Its subcellular location is the secreted. Functionally, seems to be a coreceptor in inhibin signaling, but seems not to be a high-affinity inhibin receptor. Antagonizes activin A signaling in the presence or absence of inhibin B. Necessary to mediate a specific antagonistic effect of inhibin B on activin-stimulated transcription. This chain is Immunoglobulin superfamily member 1 (Igsf1), found in Mus musculus (Mouse).